The sequence spans 335 residues: Pro-cathepsin H (335 aa).

The first 22 residues, 1-22, serve as a signal peptide directing secretion; that stretch reads MWAVLSLLCAGAWLLGPPACGA. The propeptide occupies 23-97; sequence SNLAVSSFEK…DEIRHKYLWS (75 aa). 2 N-linked (GlcNAc...) asparagine glycosylation sites follow: N72 and N101. 4 disulfides stabilise this stretch: C102–C327, C138–C181, C172–C214, and C272–C322. A propeptide spanning residues 107 to 115 is cleaved from the precursor; the sequence is GNYLRGTGP. C141 is an active-site residue. The N-linked (GlcNAc...) asparagine glycan is linked to N230. Residues H281 and N301 contribute to the active site.

Belongs to the peptidase C1 family. Composed of cathepsin H and mini chain; disulfide-linked. Cathepsin H may be split into heavy and light chain. All chains are held together by disulfide bonds.

The protein resides in the lysosome. It carries out the reaction Hydrolysis of proteins, acting as an aminopeptidase (notably, cleaving Arg-|-Xaa bonds) as well as an endopeptidase.. Important for the overall degradation of proteins in lysosomes. This chain is Pro-cathepsin H (CTSH), found in Sus scrofa (Pig).